Consider the following 256-residue polypeptide: SPX domain-containing protein 1 (256 aa).

In terms of domain architecture, SPX spans 1-155 (MKFGKSLSNQ…GDLMRLPFIQ (155 aa)). A Bipartite nuclear localization signal motif is present at residues 30–46 (KRLKLIGSKTADRPVKR).

Interacts with PHR1 in a highly Pi-dependent manner.

Its subcellular location is the nucleus. In terms of biological role, plays a positive role in plant adaptation to phosphate starvation. Inhibits PHR1 DNA-binding activity in a Pi-dependent manner. The sequence is that of SPX domain-containing protein 1 from Arabidopsis thaliana (Mouse-ear cress).